Here is a 355-residue protein sequence, read N- to C-terminus: Ribosomal RNA large subunit methyltransferase M (355 aa).

S-adenosyl-L-methionine-binding positions include serine 191, 224–227 (APGG), aspartate 243, aspartate 263, and aspartate 279. Lysine 308 functions as the Proton acceptor in the catalytic mechanism.

It belongs to the class I-like SAM-binding methyltransferase superfamily. RNA methyltransferase RlmE family. RlmM subfamily. Monomer.

Its subcellular location is the cytoplasm. It catalyses the reaction cytidine(2498) in 23S rRNA + S-adenosyl-L-methionine = 2'-O-methylcytidine(2498) in 23S rRNA + S-adenosyl-L-homocysteine + H(+). In terms of biological role, catalyzes the 2'-O-methylation at nucleotide C2498 in 23S rRNA. The protein is Ribosomal RNA large subunit methyltransferase M of Stenotrophomonas maltophilia (strain R551-3).